The primary structure comprises 87 residues: uncharacterized protein (87 aa).

Residues 1 to 19 (MLVLQLAVLVTAVYAFVHA) form the signal peptide. The chain crosses the membrane as a helical span at residues 51–71 (ILGFVFGVLGIVIAACAAGVY).

This sequence to M.tuberculosis Rv0476.

It localises to the membrane. This is an uncharacterized protein from Mycobacterium leprae (strain TN).